The primary structure comprises 405 residues: Aspartokinase (405 aa).

2 consecutive ACT domains span residues 267 to 344 (VSME…AKVS) and 345 to 405 (IVGV…QLDQ).

Belongs to the aspartokinase family.

The enzyme catalyses L-aspartate + ATP = 4-phospho-L-aspartate + ADP. It functions in the pathway amino-acid biosynthesis; L-lysine biosynthesis via DAP pathway; (S)-tetrahydrodipicolinate from L-aspartate: step 1/4. Its pathway is amino-acid biosynthesis; L-methionine biosynthesis via de novo pathway; L-homoserine from L-aspartate: step 1/3. It participates in amino-acid biosynthesis; L-threonine biosynthesis; L-threonine from L-aspartate: step 1/5. This chain is Aspartokinase (lysC), found in Helicobacter pylori (strain J99 / ATCC 700824) (Campylobacter pylori J99).